We begin with the raw amino-acid sequence, 169 residues long: Thermonuclease (169 aa).

Positions 1–26 are cleaved as a signal peptide; it reads MKKITTGLIIVVAAIIVLSIQFMTES. Active-site residues include Arg-65, Glu-73, and Arg-115.

Belongs to the thermonuclease family. Ca(2+) is required as a cofactor.

The protein localises to the secreted. It carries out the reaction Endonucleolytic cleavage to nucleoside 3'-phosphates and 3'-phosphooligonucleotide end-products.. Enzyme that catalyzes the hydrolysis of both DNA and RNA at the 5'-position of the phosphodiester bond. This Staphylococcus hyicus protein is Thermonuclease (nucH).